We begin with the raw amino-acid sequence, 1088 residues long: DNA polymerase II large subunit (1088 aa).

The protein belongs to the archaeal DNA polymerase II family. As to quaternary structure, heterodimer of a large subunit and a small subunit.

The catalysed reaction is DNA(n) + a 2'-deoxyribonucleoside 5'-triphosphate = DNA(n+1) + diphosphate. It carries out the reaction Exonucleolytic cleavage in the 3'- to 5'-direction to yield nucleoside 5'-phosphates.. Its function is as follows. Possesses two activities: a DNA synthesis (polymerase) and an exonucleolytic activity that degrades single-stranded DNA in the 3'- to 5'-direction. Has a template-primer preference which is characteristic of a replicative DNA polymerase. This is DNA polymerase II large subunit (polC) from Thermoplasma volcanium (strain ATCC 51530 / DSM 4299 / JCM 9571 / NBRC 15438 / GSS1).